Here is a 631-residue protein sequence, read N- to C-terminus: 2-isopropylmalate synthase 2, chloroplastic (631 aa).

Residues 1–46 constitute a chloroplast transit peptide; sequence MESSILKSPNLSSPSFGVPSIPALSSSSTSPFSSLHLRSQNHRTIS. The Pyruvate carboxyltransferase domain maps to 87–360; sequence VRIFDTTLRD…FTGIDTRHIV (274 aa). D96, H293, and N329 together coordinate a divalent metal cation.

Belongs to the alpha-IPM synthase/homocitrate synthase family. LeuA type 1 subfamily. In terms of assembly, homotetramer. It depends on Mg(2+) as a cofactor. Requires Mn(2+) as cofactor. As to expression, expressed in roots, stems, leaves, flowers and siliques.

It localises to the plastid. Its subcellular location is the chloroplast. It carries out the reaction 3-methyl-2-oxobutanoate + acetyl-CoA + H2O = (2S)-2-isopropylmalate + CoA + H(+). The protein operates within amino-acid biosynthesis; L-leucine biosynthesis; L-leucine from 3-methyl-2-oxobutanoate: step 1/4. Feedback inhibition by Leu. In terms of biological role, catalyzes the condensation of the acetyl group of acetyl-CoA with 3-methyl-2-oxobutanoate (2-oxoisovalerate) to form 3-carboxy-3-hydroxy-4-methylpentanoate (2-isopropylmalate). Involved in Leu biosynthesis, but does not participate in the chain elongation of glucosinolates. This Arabidopsis thaliana (Mouse-ear cress) protein is 2-isopropylmalate synthase 2, chloroplastic.